We begin with the raw amino-acid sequence, 485 residues long: Ribosomal protein uS12 methylthiotransferase RimO (485 aa).

An MTTase N-terminal domain is found at 19 to 135 (VKVGFISLGC…IGEVVAGILA (117 aa)). Residues cysteine 28, cysteine 64, cysteine 98, cysteine 172, cysteine 176, and cysteine 179 each coordinate [4Fe-4S] cluster. In terms of domain architecture, Radical SAM core spans 158-387 (ATPGYTAYLK…MEVQQEIARR (230 aa)). Positions 390-461 (QLQVGRELEV…DYDLLGEATE (72 aa)) constitute a TRAM domain.

The protein belongs to the methylthiotransferase family. RimO subfamily. It depends on [4Fe-4S] cluster as a cofactor.

Its subcellular location is the cytoplasm. It catalyses the reaction L-aspartate(89)-[ribosomal protein uS12]-hydrogen + (sulfur carrier)-SH + AH2 + 2 S-adenosyl-L-methionine = 3-methylsulfanyl-L-aspartate(89)-[ribosomal protein uS12]-hydrogen + (sulfur carrier)-H + 5'-deoxyadenosine + L-methionine + A + S-adenosyl-L-homocysteine + 2 H(+). Catalyzes the methylthiolation of an aspartic acid residue of ribosomal protein uS12. This is Ribosomal protein uS12 methylthiotransferase RimO from Symbiobacterium thermophilum (strain DSM 24528 / JCM 14929 / IAM 14863 / T).